We begin with the raw amino-acid sequence, 906 residues long: Toll-like receptor 12 (906 aa).

A signal peptide spans 1–21 (MGRYWLLPGLLLSLPLVTGWS). At 22 to 709 (TSNCLVTEGS…DHCPQTLELK (688 aa)) the chain is on the extracellular side. The N-linked (GlcNAc...) asparagine glycan is linked to asparagine 59. LRR repeat units follow at residues 91–114 (FPGL…LRGL), 115–140 (GQLQ…AFSD), 142–170 (ISLQ…QWLG), 198–222 (SWTL…SLQG), 224–247 (QVEI…GLQK), 267–290 (HFEL…ALAS), 291–314 (CHSL…FLTA), 316–338 (PRLQ…MNET), 341–364 (VSGL…AFSC), 366–388 (PHLR…LFQE), 389–412 (LQQL…WLAA), 414–436 (PALT…GFWG), 462–484 (LTSL…PAIF), 485–508 (PSLE…NASG), and 510–533 (FPAL…GTSN). Residue asparagine 336 is glycosylated (N-linked (GlcNAc...) asparagine). Residue asparagine 505 is glycosylated (N-linked (GlcNAc...) asparagine). Asparagine 552 is a glycosylation site (N-linked (GlcNAc...) asparagine). 2 LRR repeats span residues 562-586 (LPSL…QLEE) and 591-614 (LPQL…AFQR). A helical membrane pass occupies residues 710–730 (LFLASSALVFMLIALPLLQEA). Topologically, residues 731-906 (RNSWIPYLQA…FWTWLRSRLG (176 aa)) are cytoplasmic. The 147-residue stretch at 759-905 (FLFDVFVSHC…GFWTWLRSRL (147 aa)) folds into the TIR domain.

It belongs to the Toll-like receptor family. In terms of assembly, binds MYD88 via their respective TIR domains. In terms of tissue distribution, macrophages, liver, kidney and bladder epithelial cells.

It is found in the membrane. Participates in the innate immune response to microbial agents. Acts via MYD88 and TRAF6, leading to NF-kappa-B activation, cytokine secretion and the inflammatory response. Plays a role in preventing infection of internal organs of the urogenital system. The protein is Toll-like receptor 12 of Mus musculus (Mouse).